The sequence spans 537 residues: MAVAAAAVAAPAGGGGARAQRSGLLEVLVRDRWHKVLVNLSEDALVLSCEEGAAAYNGIGAATNGSFCRGSGTGHPVPGVAQAPDSPAGVRTAFTDLPEQVPESISNQKRGVKVLKQELGGLGISIKGGKENKMPILISKIFKGLAADQTQALYVGDAILSVNGADLRDATHDEAVQALKRAGKEVLLEVKYMREATPYVKKGSPVSEIGWETPPPESPRLGGGSAEPLSSQSFSFHRDRKSIPLKMCYVTRNMTLADPENRQLEIHSPDAKHTVILRSKDSATAQAWFSAIHSNAGDLLTRVVADIREQLGKTGIAGSREIRHLGWLAEKVPGESEKQWKPALVVLTEKDLLIYDSMPRRKEAWFSPVHSYPLLATRLVHSGPGKGSPQAGMDLSFATRTGTKQGIETHLFRAEISRDLSHWTRSIVQGCHNSAELTAEITTACTYRNQECRLTIHYDNGFSISTEPQDGAFPKTIIQSPYEKLKMSSDDGIRMLYLDFGGKEGEIQLDLHSCPKPIVFIIHSFLSAKITRLGLVA.

Position 2 is an N-acetylalanine (A2). PH domains follow at residues 18-297 (RAQR…SNAG) and 321-432 (EIRH…QGCH). Residues S86, S125, and S204 each carry the phosphoserine modification. The 84-residue stretch at 111 to 194 (GVKVLKQELG…EVLLEVKYMR (84 aa)) folds into the PDZ domain. The segment at 204–233 (SPVSEIGWETPPPESPRLGGGSAEPLSSQS) is disordered. T213 carries the post-translational modification Phosphothreonine. Residues S218, S225, S231, S235, and S388 each carry the phosphoserine modification. One can recognise an SU domain in the interval 481–537 (PYEKLKMSSDDGIRMLYLDFGGKEGEIQLDLHSCPKPIVFIIHSFLSAKITRLGLVA). A calmodulin-binding region spans residues 517–537 (PIVFIIHSFLSAKITRLGLVA).

Belongs to the syntrophin family. In terms of assembly, monomer and homodimer. Interacts with the viral HTLV-1 TAX protein and other members of the syntrophin family: SNTA1 and SNTB2. Interacts with the dystrophin protein DMD and related proteins DTNA and UTRN and with the sodium channel proteins SCN4A and SCN5A. Interacts with DTNB. In terms of processing, phosphorylated by CaM-kinase II. In terms of tissue distribution, ubiquitous. Expressed at high levels in the liver.

The protein resides in the cell membrane. The protein localises to the sarcolemma. It is found in the cell junction. Its subcellular location is the cytoplasm. It localises to the cytoskeleton. Adapter protein that binds to and probably organizes the subcellular localization of a variety of membrane proteins. May link various receptors to the actin cytoskeleton and the dystrophin glycoprotein complex. This Mus musculus (Mouse) protein is Beta-1-syntrophin (Sntb1).